The following is a 64-amino-acid chain: SPbeta prophage-derived uncharacterized protein YoqI (64 aa).

This Bacillus subtilis (strain 168) protein is SPbeta prophage-derived uncharacterized protein YoqI (yoqI).